Here is a 187-residue protein sequence, read N- to C-terminus: Large ribosomal subunit protein uL5 (187 aa).

It belongs to the universal ribosomal protein uL5 family. As to quaternary structure, part of the 50S ribosomal subunit; part of the 5S rRNA/L5/L18/L25 subcomplex. Contacts the 5S rRNA and the P site tRNA. Forms a bridge to the 30S subunit in the 70S ribosome.

This is one of the proteins that bind and probably mediate the attachment of the 5S RNA into the large ribosomal subunit, where it forms part of the central protuberance. In the 70S ribosome it contacts protein S13 of the 30S subunit (bridge B1b), connecting the 2 subunits; this bridge is implicated in subunit movement. Contacts the P site tRNA; the 5S rRNA and some of its associated proteins might help stabilize positioning of ribosome-bound tRNAs. This chain is Large ribosomal subunit protein uL5, found in Mycolicibacterium smegmatis (strain ATCC 700084 / mc(2)155) (Mycobacterium smegmatis).